The chain runs to 410 residues: Elongation factor Tu, chloroplastic (410 aa).

The region spanning 10 to 215 (KPHINIGTIG…MVDKYFPTPE (206 aa)) is the tr-type G domain. The segment at 19–26 (GHVDHGKT) is G1. 19-26 (GHVDHGKT) is a binding site for GTP. Thr-26 lines the Mg(2+) pocket. Residues 61–65 (GITIN) form a G2 region. The G3 stretch occupies residues 82–85 (DCPG). GTP is bound by residues 82-86 (DCPGH) and 137-140 (NKAD). The G4 stretch occupies residues 137–140 (NKAD). The G5 stretch occupies residues 175–177 (SAL).

This sequence belongs to the TRAFAC class translation factor GTPase superfamily. Classic translation factor GTPase family. EF-Tu/EF-1A subfamily.

It is found in the plastid. The protein resides in the chloroplast. It catalyses the reaction GTP + H2O = GDP + phosphate + H(+). Its function is as follows. GTP hydrolase that promotes the GTP-dependent binding of aminoacyl-tRNA to the A-site of ribosomes during protein biosynthesis. The polypeptide is Elongation factor Tu, chloroplastic (tufA) (Cyanidium caldarium (Red alga)).